The following is a 460-amino-acid chain: Glycogen synthase (460 aa).

K15 contacts ADP-alpha-D-glucose.

It belongs to the glycosyltransferase 1 family. Bacterial/plant glycogen synthase subfamily.

It catalyses the reaction [(1-&gt;4)-alpha-D-glucosyl](n) + ADP-alpha-D-glucose = [(1-&gt;4)-alpha-D-glucosyl](n+1) + ADP + H(+). It participates in glycan biosynthesis; glycogen biosynthesis. Its function is as follows. Synthesizes alpha-1,4-glucan chains using ADP-glucose. This is Glycogen synthase from Trichodesmium erythraeum (strain IMS101).